We begin with the raw amino-acid sequence, 216 residues long: Octanoyltransferase (216 aa).

A BPL/LPL catalytic domain is found at 33–216 (AATADELWIV…ANRLSTSLSR (184 aa)). Residues 72 to 79 (RGGEVTYH), 148 to 150 (ALG), and 162 to 164 (GVS) each bind substrate. The active-site Acyl-thioester intermediate is the Cys180.

This sequence belongs to the LipB family.

The protein resides in the cytoplasm. It carries out the reaction octanoyl-[ACP] + L-lysyl-[protein] = N(6)-octanoyl-L-lysyl-[protein] + holo-[ACP] + H(+). It participates in protein modification; protein lipoylation via endogenous pathway; protein N(6)-(lipoyl)lysine from octanoyl-[acyl-carrier-protein]: step 1/2. Its function is as follows. Catalyzes the transfer of endogenously produced octanoic acid from octanoyl-acyl-carrier-protein onto the lipoyl domains of lipoate-dependent enzymes. Lipoyl-ACP can also act as a substrate although octanoyl-ACP is likely to be the physiological substrate. The protein is Octanoyltransferase of Janthinobacterium sp. (strain Marseille) (Minibacterium massiliensis).